We begin with the raw amino-acid sequence, 280 residues long: Soluble inorganic pyrophosphatase 1, chloroplastic (280 aa).

Diphosphate is bound at residue Arg120. Residues Asp152, Asp157, and Asp189 each coordinate Mg(2+).

In terms of assembly, monomer. Mg(2+) serves as cofactor. Post-translationally, the N-terminus is blocked.

It is found in the plastid. It localises to the chloroplast. The enzyme catalyses diphosphate + H2O = 2 phosphate + H(+). The chain is Soluble inorganic pyrophosphatase 1, chloroplastic (ppa1) from Chlamydomonas reinhardtii (Chlamydomonas smithii).